The sequence spans 364 residues: DNA polymerase IV (364 aa).

The UmuC domain maps to 8-189; sequence IIHIDMDCYF…LPLTKIPGVG (182 aa). Residues D12 and D107 each contribute to the Mg(2+) site. E108 is an active-site residue.

Belongs to the DNA polymerase type-Y family. As to quaternary structure, monomer. Mg(2+) serves as cofactor.

It is found in the cytoplasm. It carries out the reaction DNA(n) + a 2'-deoxyribonucleoside 5'-triphosphate = DNA(n+1) + diphosphate. Functionally, poorly processive, error-prone DNA polymerase involved in untargeted mutagenesis. Copies undamaged DNA at stalled replication forks, which arise in vivo from mismatched or misaligned primer ends. These misaligned primers can be extended by PolIV. Exhibits no 3'-5' exonuclease (proofreading) activity. May be involved in translesional synthesis, in conjunction with the beta clamp from PolIII. The protein is DNA polymerase IV of Shewanella woodyi (strain ATCC 51908 / MS32).